Reading from the N-terminus, the 222-residue chain is MTKVLVTGFGPYGVTPDNPAQFTAEALDGRTIAGATVVSRIVPGAYFDSIAAAEQAIAEVDPQLVIMLGEYPGRAMLTVERLAQNINDCGRYGLADTAGKVLVGEPTDPDGPVAYHATVPVHEMVLAMRAAGIPADVSDAAGTFVCNHLMYGVLHHIATQNLPIRAGWVHLPCLPMVAALDRNLGVPSMSVETAVAGLVAGIEAAVQHSADTREPVPSRLQI.

Catalysis depends on residues Glu80, Cys146, and His170.

Belongs to the peptidase C15 family. As to quaternary structure, homotetramer.

The protein localises to the cytoplasm. The catalysed reaction is Release of an N-terminal pyroglutamyl group from a polypeptide, the second amino acid generally not being Pro.. Functionally, removes 5-oxoproline from various penultimate amino acid residues except L-proline. This is Pyrrolidone-carboxylate peptidase from Mycobacterium marinum (strain ATCC BAA-535 / M).